The chain runs to 203 residues: Holliday junction branch migration complex subunit RuvA (203 aa).

Residues M1–S64 are domain I. The segment at S65 to I143 is domain II. The tract at residues A144 to N150 is flexible linker. Positions L151 to S203 are domain III.

This sequence belongs to the RuvA family. Homotetramer. Forms an RuvA(8)-RuvB(12)-Holliday junction (HJ) complex. HJ DNA is sandwiched between 2 RuvA tetramers; dsDNA enters through RuvA and exits via RuvB. An RuvB hexamer assembles on each DNA strand where it exits the tetramer. Each RuvB hexamer is contacted by two RuvA subunits (via domain III) on 2 adjacent RuvB subunits; this complex drives branch migration. In the full resolvosome a probable DNA-RuvA(4)-RuvB(12)-RuvC(2) complex forms which resolves the HJ.

The protein resides in the cytoplasm. Its function is as follows. The RuvA-RuvB-RuvC complex processes Holliday junction (HJ) DNA during genetic recombination and DNA repair, while the RuvA-RuvB complex plays an important role in the rescue of blocked DNA replication forks via replication fork reversal (RFR). RuvA specifically binds to HJ cruciform DNA, conferring on it an open structure. The RuvB hexamer acts as an ATP-dependent pump, pulling dsDNA into and through the RuvAB complex. HJ branch migration allows RuvC to scan DNA until it finds its consensus sequence, where it cleaves and resolves the cruciform DNA. The sequence is that of Holliday junction branch migration complex subunit RuvA from Chlorobium limicola (strain DSM 245 / NBRC 103803 / 6330).